The chain runs to 997 residues: Protein translocase subunit SecA (997 aa).

ATP contacts are provided by residues Q84, 102-106 (GEGKT), and D582. The disordered stretch occupies residues 950 to 997 (PYVPVPEAKPEPSEVFGVERKRATPPPQPGLSRAERRRLMRQEKKRKK). Positions 957 to 971 (AKPEPSEVFGVERKR) are enriched in basic and acidic residues. Residues 984–997 (ERRRLMRQEKKRKK) show a composition bias toward basic residues.

This sequence belongs to the SecA family. Part of the essential Sec protein translocation apparatus which comprises SecA, SecYEG and auxiliary proteins SecDF. Other proteins may also be involved. Monomer and homodimer.

It is found in the cell inner membrane. The protein resides in the cytoplasm. The catalysed reaction is ATP + H2O + cellular proteinSide 1 = ADP + phosphate + cellular proteinSide 2.. Functionally, part of the Sec protein translocase complex. Interacts with the SecYEG preprotein conducting channel. Has a central role in coupling the hydrolysis of ATP to the transfer of proteins into and across the cell membrane, serving as an ATP-driven molecular motor driving the stepwise translocation of polypeptide chains across the membrane. The chain is Protein translocase subunit SecA from Thermus thermophilus (strain ATCC 27634 / DSM 579 / HB8).